Here is a 64-residue protein sequence, read N- to C-terminus: uncharacterized protein (64 aa).

Residues 33-55 traverse the membrane as a helical segment; the sequence is YTPLGSYMIFGIVHYFCSYHIGI.

It localises to the membrane. This is an uncharacterized protein from Saccharomyces cerevisiae (strain ATCC 204508 / S288c) (Baker's yeast).